The chain runs to 497 residues: Dihydrolipoyl dehydrogenase (497 aa).

FAD is bound by residues 60 to 69, Lys-78, Gly-142, and 170 to 172; these read EKEPSLGGTC and TGS. Cys-69 and Cys-74 are joined by a disulfide. NAD(+) is bound by residues 207–214, Glu-230, Val-264, and Gly-302; that span reads GAGVIGLE. Residues Asp-343 and 349–352 contribute to the FAD site; that span reads MLAH. Residue His-475 is the Proton acceptor of the active site.

Belongs to the class-I pyridine nucleotide-disulfide oxidoreductase family. In terms of assembly, homodimer. The cofactor is FAD.

It is found in the cytoplasm. The catalysed reaction is N(6)-[(R)-dihydrolipoyl]-L-lysyl-[protein] + NAD(+) = N(6)-[(R)-lipoyl]-L-lysyl-[protein] + NADH + H(+). The protein is Dihydrolipoyl dehydrogenase of Manduca sexta (Tobacco hawkmoth).